Consider the following 232-residue polypeptide: uncharacterized protein (232 aa).

Basic and acidic residues predominate over residues R86 to A95. Residues R86 to D107 are disordered.

This is an uncharacterized protein from Sinorhizobium fredii (strain NBRC 101917 / NGR234).